Consider the following 211-residue polypeptide: Ubiquitin-conjugating enzyme E2 S-B (211 aa).

The UBC core domain maps to 11–157; that stretch reads HIIRRVYKEV…ARLMTDIHAQ (147 aa). C95 functions as the Glycyl thioester intermediate in the catalytic mechanism. A disordered region spans residues 158-211; sequence GTSLRGKDPTDPCSSASTPVVSGDGPMAKKHAGDRDKKLAAKKKTDKKRALRRL. Residues 197–211 show a composition bias toward basic residues; that stretch reads AAKKKTDKKRALRRL.

It belongs to the ubiquitin-conjugating enzyme family.

It carries out the reaction S-ubiquitinyl-[E1 ubiquitin-activating enzyme]-L-cysteine + [E2 ubiquitin-conjugating enzyme]-L-cysteine = [E1 ubiquitin-activating enzyme]-L-cysteine + S-ubiquitinyl-[E2 ubiquitin-conjugating enzyme]-L-cysteine.. The protein operates within protein modification; protein ubiquitination. In terms of biological role, catalyzes the covalent attachment of ubiquitin to other proteins. Acts as an essential factor of the anaphase promoting complex/cyclosome (APC/C), a cell cycle-regulated ubiquitin ligase that controls progression through mitosis. Acts by specifically elongating 'Lys-11'-linked polyubiquitin chains initiated by the E2 enzyme ube2c/ubch10 on APC/C substrates, enhancing the degradation of APC/C substrates by the proteasome and promoting mitotic exit. The sequence is that of Ubiquitin-conjugating enzyme E2 S-B (ube2s-b) from Xenopus laevis (African clawed frog).